The following is a 240-amino-acid chain: uncharacterized protein (240 aa).

The tract at residues 216–240 (MKQSKNKPRIRQAVGATRQCRKPQA) is disordered.

This is an uncharacterized protein from Escherichia coli (strain K12).